The sequence spans 103 residues: Large ribosomal subunit protein bL21 (103 aa).

Belongs to the bacterial ribosomal protein bL21 family. Part of the 50S ribosomal subunit. Contacts protein L20.

In terms of biological role, this protein binds to 23S rRNA in the presence of protein L20. The polypeptide is Large ribosomal subunit protein bL21 (Clostridium acetobutylicum (strain ATCC 824 / DSM 792 / JCM 1419 / IAM 19013 / LMG 5710 / NBRC 13948 / NRRL B-527 / VKM B-1787 / 2291 / W)).